A 161-amino-acid chain; its full sequence is UPF0262 protein Meso_0189 (161 aa).

This sequence belongs to the UPF0262 family.

This chain is UPF0262 protein Meso_0189, found in Chelativorans sp. (strain BNC1).